Consider the following 73-residue polypeptide: Beta-defensin 10 (73 aa).

An N-terminal signal peptide occupies residues 1 to 23 (MRTLCSLLLICCLLFSYTTPAVG). 3 disulfides stabilise this stretch: cysteine 37–cysteine 66, cysteine 44–cysteine 59, and cysteine 49–cysteine 67.

It belongs to the beta-defensin family. Expressed in both adult and neonate brain, and very weakly in kidneys, epididymis, and testis.

The protein resides in the secreted. In terms of biological role, has antibacterial activity. The polypeptide is Beta-defensin 10 (Defb10) (Mus musculus (Mouse)).